Here is a 566-residue protein sequence, read N- to C-terminus: Hexose transporter 2 (566 aa).

The tract at residues 1 to 39 is disordered; that stretch reads MSELETGTAAHGTPVENKSVSSSQASTPTNVGSRDDLKV. Residues 16–32 show a composition bias toward polar residues; it reads ENKSVSSSQASTPTNVG. The Cytoplasmic segment spans residues 22–61; that stretch reads SSQASTPTNVGSRDDLKVDDDNHSVDAIELPKKPRSAYIT. A helical membrane pass occupies residues 62–82; that stretch reads VSILCLMVAFGGFVFGWDTGT. Residues 83–112 are Extracellular-facing; that stretch reads ISGFVNQTDFIRRFGQEKADGSHYLSNVRT. The N-linked (GlcNAc...) asparagine glycan is linked to Asn88. Residues 113–133 form a helical membrane-spanning segment; sequence GLIVSIFNIGCAIGGIILSKL. The Cytoplasmic portion of the chain corresponds to 134-140; sequence GDMYGRR. A helical transmembrane segment spans residues 141–161; sequence IGLMIVVLIYVVGIIIQIASI. The Extracellular segment spans residues 162–166; sequence DKWYQ. A helical membrane pass occupies residues 167–187; the sequence is YFIGRIISGLGVGGISVLSPM. Residues 188–198 are Cytoplasmic-facing; sequence LISETAPKHIR. Residues 199-219 form a helical membrane-spanning segment; it reads GTLVSFYQLMITFGIFLGYCT. Residues 220–233 are Extracellular-facing; it reads NYGTKTYSNSVQWR. Residues 234-254 traverse the membrane as a helical segment; the sequence is VPLGLCFAWAIFMITGMLFVP. At 255–333 the chain is on the cytoplasmic side; the sequence is ESPRFLVEKD…MGMLIQSFQQ (79 aa). A helical transmembrane segment spans residues 334 to 353; that stretch reads LTGNNYFFYYGTTIFNSVGM. The Extracellular segment spans residues 354-357; that stretch reads DDSF. The chain crosses the membrane as a helical span at residues 358 to 378; it reads ETSIVLGIVNFASTFVAIYVV. The Cytoplasmic segment spans residues 379-385; the sequence is DKFGRRK. A helical transmembrane segment spans residues 386-406; sequence CLLWGAAAMTACMVVFASVGV. Residues 407-428 are Extracellular-facing; that stretch reads TRLWPDGANHPETASKGAGNCM. A helical transmembrane segment spans residues 429–449; it reads IVFACFYIFCFATSWAPIAYV. Over 450 to 465 the chain is Cytoplasmic; sequence VVAESYPLRVKAKCMA. A helical membrane pass occupies residues 466–486; the sequence is IATASNWIWGFLNGFFTPFIT. Residues 487-492 lie on the Extracellular side of the membrane; that stretch reads SAIHFY. The helical transmembrane segment at 493–513 threads the bilayer; sequence YGYVFMGCLVAMFFYVFFFVP. Residues 514–566 lie on the Cytoplasmic side of the membrane; it reads ETKGLTLEEVQEMWEEGVLPWKSSSWVPSSRRNAGYDVDALQHDEKPWYKAML.

Belongs to the major facilitator superfamily. Sugar transporter (TC 2.A.1.1) family.

The protein resides in the membrane. In terms of biological role, probable glucose transporter. The sequence is that of Hexose transporter 2 (KHT2) from Kluyveromyces lactis (Yeast).